Reading from the N-terminus, the 112-residue chain is Elongin-C (112 aa).

It belongs to the SKP1 family. Heterotrimer of an A (ELOA, ELOA2 or ELOA3P), ELOB and ELOC subunit. The elongin BC complex interacts with EPOP; leading to recruit the elongin BC complex to Polycomb group (PcG) target genes, thereby restricting excessive activity of the PRC2/EED-EZH2 complex. Component of multiple cullin-RING E3 ubiquitin-protein ligase complexes composed of Elongin BC (ELOB and ELOC), a cullin (CUL2 or CUL5), a catalytic subunit (RBX1 or RNF7/RBX2), as well as a substrate adapter protein that can be either ASB2, ASB9, ASB11, KLHDC2, KLHDC3, KLHDC10, APPBP2, FEM1A, FEM1B, FEM1C, LRR1, PCMTD1, SOCS1, SOCS2, SOCS5, SPSB1, SPSB3, ELOA, VHL, WSB1, ZYG11B or RAB40C. Interacts with TMF1. As part of the Elongin BC E3 ubiquitin ligase complex; interacts with NRBP1. May form oligomers as a KLHDC2/KLHDC3-ELOB-ELOC complex; this interaction is autoinhibitory for the E3 ligase complex as the substrate-binding site of KLHDC2/KLHDC3 is blocked in the oligomer. In terms of processing, ubiquitinated by the DCX(AMBRA1) complex, leading to its degradation by the proteasome.

It localises to the nucleus. It participates in protein modification; protein ubiquitination. Functionally, SIII, also known as elongin, is a general transcription elongation factor that increases the RNA polymerase II transcription elongation past template-encoded arresting sites. Subunit A is transcriptionally active and its transcription activity is strongly enhanced by binding to the dimeric complex of the SIII regulatory subunits B and C (elongin BC complex). In embryonic stem cells, the elongin BC complex is recruited by EPOP to Polycomb group (PcG) target genes in order generate genomic region that display both active and repressive chromatin properties, an important feature of pluripotent stem cells. Core component of multiple cullin-RING-based ECS (ElonginB/C-CUL2/5-SOCS-box protein) E3 ubiquitin-protein ligase complexes, which mediate the ubiquitination of target proteins. By binding to BC-box motifs it seems to link target recruitment subunits, like VHL and members of the SOCS box family, to Cullin/RBX1 modules that activate E2 ubiquitination enzymes. Component the von Hippel-Lindau ubiquitination complex CBC(VHL). A number of ECS complexes (containing either KLHDC2, KLHDC3, KLHDC10, APPBP2, FEM1A, FEM1B or FEM1C as substrate-recognition component) are part of the DesCEND (destruction via C-end degrons) pathway, which recognizes a C-degron located at the extreme C terminus of target proteins, leading to their ubiquitination and degradation. The ECS(ASB9) complex mediates ubiquitination and degradation of CKB. As part of a multisubunit ubiquitin ligase complex, polyubiquitinates monoubiquitinated POLR2A. ECS(LRR1) ubiquitinates MCM7 and promotes CMG replisome disassembly by VCP and chromatin extraction during S-phase. As part of the ECS(RAB40C) complex, mediates ANKRD28 ubiquitination and degradation, thereby inhibiting protein phosphatase 6 (PP6) complex activity and focal adhesion assembly during cell migration. This chain is Elongin-C (ELOC), found in Bos taurus (Bovine).